Here is a 282-residue protein sequence, read N- to C-terminus: Undecaprenyl-diphosphatase (282 aa).

Transmembrane regions (helical) follow at residues 7–29 (VLFA…HVVI), 45–65 (FLPF…LYFW), 89–109 (GLLL…FALK), 115–135 (LFAS…VLII), 153–173 (LTLR…LPGL), 196–216 (FAFL…VPHL), 229–249 (TALL…AFLM), and 258–278 (WALG…LILI).

Belongs to the UppP family.

The protein resides in the cell inner membrane. It catalyses the reaction di-trans,octa-cis-undecaprenyl diphosphate + H2O = di-trans,octa-cis-undecaprenyl phosphate + phosphate + H(+). Functionally, catalyzes the dephosphorylation of undecaprenyl diphosphate (UPP). Confers resistance to bacitracin. The protein is Undecaprenyl-diphosphatase of Acidiphilium cryptum (strain JF-5).